The chain runs to 417 residues: Phosphoglycerate kinase 1 (417 aa).

S2 is subject to N-acetylserine. S2 and S4 each carry phosphoserine. N6-succinyllysine is present on K6. K11 carries the post-translational modification N6-acetyllysine. (2R)-3-phosphoglycerate contacts are provided by V23, D24, F25, N26, Q38, and R39. The interval 38-43 (QRIKAA) is mitochondrial targeting region exposed following cis-trans isomerization by PIN1 and recognized by the TOM complex for mitochondrial translocation of the protein. K48 carries the N6-acetyllysine; alternate modification. N6-succinyllysine; alternate is present on K48. S62, H63, G65, and R66 together coordinate (2R)-3-phosphoglycerate. An N6-acetyllysine modification is found at K75. Y76 carries the phosphotyrosine modification. An N6-acetyllysine mark is found at K86 and K91. K97 is modified (N6-acetyllysine; alternate). Position 97 is an N6-(2-hydroxyisobutyryl)lysine; alternate (K97). (2R)-3-phosphoglycerate-binding residues include L122 and R123. Residue K131 is modified to N6-acetyllysine; alternate. At K131 the chain carries N6-malonyllysine; alternate. Position 146 is an N6-acetyllysine (K146). The (2R)-3-phosphoglycerate site is built by H170 and R171. An N6-succinyllysine modification is found at K191. Y196 is subject to Phosphotyrosine. K199 carries the N6-acetyllysine modification. S203 is subject to Phosphoserine. Residue G214 participates in ADP binding. G214 contacts CDP. AMP is bound by residues A215 and K216. A215 contributes to the ATP binding site. A215 serves as a coordination point for Mg(2+). K216 carries the N6-(2-hydroxyisobutyryl)lysine modification. Mg(2+) is bound by residues A218 and D219. Residue D219 participates in CDP binding. K220 contacts AMP. K220 is a binding site for ATP. K220 is modified (N6-(2-hydroxyisobutyryl)lysine). Residue G238 participates in ADP binding. Position 238 (G238) interacts with CDP. Residue G239 participates in AMP binding. G239 is a binding site for ATP. Residues K267 and K291 each carry the N6-acetyllysine modification. G313 serves as a coordination point for AMP. Residue G313 coordinates ATP. At K323 the chain carries N6-(2-hydroxyisobutyryl)lysine. Residues G338, V340, and F343 each coordinate CDP. Position 343 (F343) interacts with ADP. E344 contributes to the AMP binding site. Position 344 (E344) interacts with ATP. Position 361 is an N6-acetyllysine (K361). D375 and T376 together coordinate ATP. D375 contributes to the Mg(2+) binding site.

It belongs to the phosphoglycerate kinase family. Monomer. Interacts with kinase MAPK1/ERK2; the interaction is direct, occurs under hypoxic conditions, and promotes its interaction with PIN1. Interacts with peptidyl-prolyl cis-trans isomerase PIN1; the interaction is direct, occurs under hypoxic conditions, and targets the protein to the mitochondrion by promoting interactions with the TOM complex. Interacts with mitochondrial circRNA mcPGK1 (via its 2nd stem-loop); the interaction is direct and targets the protein to the mitochondrion by promoting interactions with the TOM complex. Interacts with pyruvate dehydrogenase kinase PDK1; the interaction is direct, occurs under hypoxic conditions and leads to PDK1-mediated inhibition of pyruvate dehydrogenase complex activity. The cofactor is Mg(2+). Post-translationally, phosphorylated at Ser-203 by MAPK1/ERK2 under hypoxic conditions, which promotes its mitochondrial targeting.

The protein resides in the cytoplasm. It is found in the cytosol. The protein localises to the mitochondrion matrix. It catalyses the reaction (2R)-3-phosphoglycerate + ATP = (2R)-3-phospho-glyceroyl phosphate + ADP. It carries out the reaction L-seryl-[protein] + ATP = O-phospho-L-seryl-[protein] + ADP + H(+). It functions in the pathway carbohydrate degradation; glycolysis; pyruvate from D-glyceraldehyde 3-phosphate: step 2/5. Its function is as follows. Catalyzes one of the two ATP producing reactions in the glycolytic pathway via the reversible conversion of 1,3-diphosphoglycerate to 3-phosphoglycerate. Both L- and D- forms of purine and pyrimidine nucleotides can be used as substrates, but the activity is much lower on pyrimidines. In addition to its role as a glycolytic enzyme, it seems that PGK-1 acts as a polymerase alpha cofactor protein (primer recognition protein). Acts as a protein kinase when localized to the mitochondrion where it phosphorylates pyruvate dehydrogenase kinase PDK1 to inhibit pyruvate dehydrogenase complex activity and suppress the formation of acetyl-coenzyme A from pyruvate, and consequently inhibit oxidative phosphorylation and promote glycolysis. May play a role in sperm motility. The chain is Phosphoglycerate kinase 1 (PGK1) from Sus scrofa (Pig).